Here is a 456-residue protein sequence, read N- to C-terminus: Equilibrative nucleoside transporter 1 (456 aa).

The Cytoplasmic segment spans residues 2–12 (TTSHQPQDRYK). A helical membrane pass occupies residues 13–29 (AVWLIFFMLGLGTLLPW). Over 30–82 (NFFMTATQYFTNRLDMSQNVSLVTAELSKDAQASAAPAAPLPERNSLSAIFNN) the chain is Extracellular. The N-linked (GlcNAc...) asparagine glycan is linked to Asn48. A helical transmembrane segment spans residues 83 to 107 (VMTLCAMLPLLLFTYLNSFLHQRIP). Over 108–111 (QSVR) the chain is Cytoplasmic. Residues 112-130 (ILGSLVAILLVFLITAILV) form a helical membrane-spanning segment. Residues 131–138 (KVQLDALP) lie on the Extracellular side of the membrane. A helical membrane pass occupies residues 139–157 (FFVITMIKIVLINSFGAIL). Residues 158-174 (QGSLFGLAGLLPASYTA) are Cytoplasmic-facing. A helical transmembrane segment spans residues 175 to 199 (PIMSGQGLAGFFASVAMICAIASGS). At 200 to 206 (ELSESAF) the chain is on the extracellular side. A helical transmembrane segment spans residues 207–227 (GYFITACAVIILTIICYLGLP). At 228–291 (RLEFYRYYQQ…IKAILKNISV (64 aa)) the chain is on the cytoplasmic side. Phosphoserine occurs at positions 254, 269, and 273. Positions 254 to 266 (SKGEEPRAGKEES) are enriched in basic and acidic residues. The interval 254-276 (SKGEEPRAGKEESGVSVSNSQPT) is disordered. Residues 292–311 (LAFSVCFIFTITIGMFPAVT) form a helical membrane-spanning segment. At 312–323 (VEVKSSIAGSST) the chain is on the extracellular side. Residues 324 to 342 (WERYFIPVSCFLTFNIFDW) form a helical membrane-spanning segment. At 343 to 359 (LGRSLTAVFMWPGKDSR) the chain is on the cytoplasmic side. The helical transmembrane segment at 360 to 378 (WLPSLVLARLVFVPLLLLC) threads the bilayer. At 379 to 393 (NIKPRRYLTVVFEHD) the chain is on the extracellular side. A helical membrane pass occupies residues 394 to 413 (AWFIFFMAAFAFSNGYLASL). Residues 414 to 431 (CMCFGPKKVKPAEAETAG) lie on the Cytoplasmic side of the membrane. A helical membrane pass occupies residues 432 to 452 (AIMAFFLCLGLALGAVFSFLF). Residues 453–456 (RAIV) lie on the Extracellular side of the membrane.

The protein belongs to the SLC29A/ENT transporter (TC 2.A.57) family. As to quaternary structure, identified in a complex with STOM. Glycosylated. As to expression, expressed in testis at the blood-testis barrier (at protein level). Detected in erythrocytes (at protein level). Expressed at relatively high levels in cerebral cortex, particularly the frontal and parietal lobes, and the thalamus and basal ganglia (at protein level). In the midbrain expressed at moderate levels, whereas in the other areas of the brainstem, namely medulla and pons, cerebellum and the hippocampus expressed at lower amounts when compared to the other brain regions (at protein level). Expressed in Langerhans cells and lymphocytes in the pancreas (at protein level). Expressed in kidney, in polarized renal epithelial cells. Expressed in adipose tissues. Expressed in placenta. Expressed in small intestine.

It is found in the basolateral cell membrane. The protein localises to the apical cell membrane. Its subcellular location is the cell membrane. It catalyses the reaction adenosine(in) = adenosine(out). The catalysed reaction is guanosine(in) = guanosine(out). The enzyme catalyses inosine(in) = inosine(out). It carries out the reaction uridine(out) = uridine(in). It catalyses the reaction thymidine(in) = thymidine(out). The catalysed reaction is cytidine(in) = cytidine(out). The enzyme catalyses adenine(out) = adenine(in). It carries out the reaction guanine(out) = guanine(in). It catalyses the reaction thymine(out) = thymine(in). The catalysed reaction is uracil(in) = uracil(out). The enzyme catalyses hypoxanthine(out) = hypoxanthine(in). Its activity is regulated as follows. Transporter activity is sensitive to low concentrations of the inhibitor nitrobenzylmercaptopurine riboside (NBMPR). Inhibited by dilazep. Inhibited by dipyridamole. Inhibited by hypoxanthine. Inhibited by azidothymidine (AZT). Inhibited by dideoxycytidine (ddC). Inhibited by dideoxyinosine (ddI). Inhibited by draflazine. Inhibited by soluflazine. Inhibited by cladribine. Inhibited by capecitabine. Inhibited by clofarabine. Inhibited by ribavirin. Modestly inhibited by acyclovir. Modestly inhibited by 5-fluorouracil. In terms of biological role, uniporter involved in the facilitative transport of nucleosides and nucleobases, and contributes to maintaining their cellular homeostasis. Functions as a Na(+)-independent transporter. Involved in the transport of nucleosides such as adenosine, guanosine, inosine, uridine, thymidine and cytidine. Also transports purine nucleobases (hypoxanthine, adenine, guanine) and pyrimidine nucleobases (thymine, uracil). Mediates basolateral nucleoside uptake into Sertoli cells, thereby regulating the transport of nucleosides in testis across the blood-testis barrier. Regulates inosine levels in brown adipocytes tissues (BAT) and extracellular inosine levels, which controls BAT-dependent energy expenditure. This chain is Equilibrative nucleoside transporter 1, found in Homo sapiens (Human).